Here is an 863-residue protein sequence, read N- to C-terminus: Scm-like with four MBT domains protein 1 (863 aa).

MBT repeat units lie at residues 20-120 (FSWE…LEAP), 128-232 (SDWS…LQPP), 242-346 (ADWQ…INPP), and 354-451 (FDWA…LSTP). A disordered region spans residues 638–773 (KKKNKRIGRP…SDGENKPPSP (136 aa)). Basic residues predominate over residues 660–679 (KTSKRRKRRKNIFVHKKKRS). Residues 680–691 (SASVDNTPVGSP) are compositionally biased toward polar residues. The span at 696 to 710 (GEDEDDADDGDDDSL) shows a compositional bias: acidic residues. 2 positions are modified to phosphoserine: Ser764 and Ser772. In terms of domain architecture, SAM spans 793 to 861 (WSVADVVRFI…RIKFAFYEQF (69 aa)).

As to quaternary structure, interacts with MYOD1. Component of the SLC (SFMBT1-LSD1-CoREST) corepressor complex, which also contains KDM1A/LSD1 and RCOR1/CoREST. Interacts with KDM1A/LSD1 and RCOR1/CoREST. Interacts with MYOD1. Interacts with L3MBTL3. Highly expressed in the testis, low expression was detected in brain, kidney, heart and lung.

The protein resides in the nucleus. In terms of biological role, histone-binding protein, which is part of various corepressor complexes. Mediates the recruitment of corepressor complexes to target genes, followed by chromatin compaction and repression of transcription. Plays a role during myogenesis: required for the maintenance of undifferentiated states of myogenic progenitor cells via interaction with MYOD1. Interaction with MYOD1 leads to the recruitment of associated corepressors and silencing of MYOD1 target genes. Part of the SLC complex in germ cells, where it may play a role during spermatogenesis. The protein is Scm-like with four MBT domains protein 1 (Sfmbt1) of Rattus norvegicus (Rat).